The chain runs to 158 residues: MNTIAPNLDGKHLRIGIVQARFTNEIGSEMLKVCCRTLQELGVADENITVATVPGALEIPIALMNLASSEKFDALIAIGVVIRGETYHFELVSNESGAGVSRVALDYNIPIANAVLTTENDAQAIERIEEKASDAAKVAVECANLVNLLLEEQFEDEE.

5-amino-6-(D-ribitylamino)uracil contacts are provided by residues F22, 56-58 (ALE), and 80-82 (VVI). 85 to 86 (ET) is a (2S)-2-hydroxy-3-oxobutyl phosphate binding site. H88 functions as the Proton donor in the catalytic mechanism. N113 lines the 5-amino-6-(D-ribitylamino)uracil pocket. Position 127 (R127) interacts with (2S)-2-hydroxy-3-oxobutyl phosphate.

This sequence belongs to the DMRL synthase family.

It carries out the reaction (2S)-2-hydroxy-3-oxobutyl phosphate + 5-amino-6-(D-ribitylamino)uracil = 6,7-dimethyl-8-(1-D-ribityl)lumazine + phosphate + 2 H2O + H(+). The protein operates within cofactor biosynthesis; riboflavin biosynthesis; riboflavin from 2-hydroxy-3-oxobutyl phosphate and 5-amino-6-(D-ribitylamino)uracil: step 1/2. Functionally, catalyzes the formation of 6,7-dimethyl-8-ribityllumazine by condensation of 5-amino-6-(D-ribitylamino)uracil with 3,4-dihydroxy-2-butanone 4-phosphate. This is the penultimate step in the biosynthesis of riboflavin. The protein is 6,7-dimethyl-8-ribityllumazine synthase of Neisseria meningitidis serogroup C / serotype 2a (strain ATCC 700532 / DSM 15464 / FAM18).